Consider the following 428-residue polypeptide: E3 ubiquitin-protein ligase RNF128 (428 aa).

The first 38 residues, 1 to 38 (MGPPLGAGVSCRGGCGSSRLLAWCFLLALSPQAPGSRG), serve as a signal peptide directing secretion. 3 N-linked (GlcNAc...) asparagine glycosylation sites follow: asparagine 48, asparagine 59, and asparagine 101. The PA domain occupies 75–183 (SPLEPVAGVL…LKGTKILQSI (109 aa)). The helical transmembrane segment at 208–228 (IFFVSVSFFIITAATVGYFIF) threads the bilayer. Residues 277 to 318 (CAVCIELYKPNDLVRILTCNHIFHKTCVDPWLLEHRTCPMCK) form an RING-type; atypical zinc finger. Residues 346–428 (ISNSASSHEE…QETAVREIKS (83 aa)) form a disordered region. Positions 416-428 (TPHQETAVREIKS) are enriched in basic and acidic residues.

Auto-ubiquitinated. Controls the development of T-cell clonal anergy by ubiquitination.

It localises to the cytoplasm. It is found in the endomembrane system. The protein resides in the cytoskeleton. The protein localises to the perinuclear region. It catalyses the reaction S-ubiquitinyl-[E2 ubiquitin-conjugating enzyme]-L-cysteine + [acceptor protein]-L-lysine = [E2 ubiquitin-conjugating enzyme]-L-cysteine + N(6)-ubiquitinyl-[acceptor protein]-L-lysine.. The protein operates within protein modification; protein ubiquitination. Functionally, E3 ubiquitin-protein ligase that catalyzes 'Lys-27', 'Lys-48'- or 'Lys-63'-linked polyubiquitin chains formation and plays a role in different biological processes such as modulation of immune response, cytoskeletal dynamics or protein homeostasis. Inhibits IL2 and IL4 transcription, thereby playing an important role in the induction of the anergic phenotype, a long-term stable state of T-lymphocyte unresponsiveness to antigenic stimulation associated with the blockade of interleukin production. Ubiquitinates ARPC5 with 'Lys-48' linkages and COR1A with 'Lys-63' linkages leading to their degradation, down-regulation of these cytoskeletal components results in impaired lamellipodium formation and reduced accumulation of F-actin at the immunological synapse. Functions in the patterning of the dorsal ectoderm; sensitizes ectoderm to respond to neural-inducing signals. Plays a positive role in innate immune response by promoting 'Lys-63'-linked ubiquitination of TBK1 after RNA- or DNA-virus infection. Regulates alveolar macrophage activation and neutrophil infiltration by interacting with TLR4, targeting it for degradation, and inhibiting NF-kappa-B activation, hence decreasing pro-inflammatory cytokines. Negatively regulates the IL-3/STAT5 signaling pathway by facilitating 'Lys-27'-linked polyubiquitination of IL3RA leading to its degradation via lysosomal pathway. Directly regulates the N-glycosylation process in the endoplasmic reticulum by targeting the glycosyl-transferase RPN1 for ubiquitination and degradation. Other substrates targeted for degradation by RNF128 include transmembrane proteins CD40L, CD83 or the tetraspanin CD151. The polypeptide is E3 ubiquitin-protein ligase RNF128 (RNF128) (Pongo abelii (Sumatran orangutan)).